The sequence spans 129 residues: Small ribosomal subunit protein uS11 (129 aa).

It belongs to the universal ribosomal protein uS11 family. As to quaternary structure, part of the 30S ribosomal subunit. Interacts with proteins S7 and S18. Binds to IF-3.

Functionally, located on the platform of the 30S subunit, it bridges several disparate RNA helices of the 16S rRNA. Forms part of the Shine-Dalgarno cleft in the 70S ribosome. In Marinobacter nauticus (strain ATCC 700491 / DSM 11845 / VT8) (Marinobacter aquaeolei), this protein is Small ribosomal subunit protein uS11.